A 318-amino-acid polypeptide reads, in one-letter code: Glycine--tRNA ligase alpha subunit (318 aa).

Belongs to the class-II aminoacyl-tRNA synthetase family. As to quaternary structure, tetramer of two alpha and two beta subunits.

The protein resides in the cytoplasm. It catalyses the reaction tRNA(Gly) + glycine + ATP = glycyl-tRNA(Gly) + AMP + diphosphate. In Saccharophagus degradans (strain 2-40 / ATCC 43961 / DSM 17024), this protein is Glycine--tRNA ligase alpha subunit.